The following is a 211-amino-acid chain: Large ribosomal subunit protein uL4 (211 aa).

Over residues 41 to 52 (QTNARQGTASTK) the composition is skewed to polar residues. The tract at residues 41–78 (QTNARQGTASTKTRAEVRGGGRKPWRQKGTGRARAGSI) is disordered. Positions 60–71 (GGRKPWRQKGTG) are enriched in basic residues.

The protein belongs to the universal ribosomal protein uL4 family. In terms of assembly, part of the 50S ribosomal subunit.

Functionally, one of the primary rRNA binding proteins, this protein initially binds near the 5'-end of the 23S rRNA. It is important during the early stages of 50S assembly. It makes multiple contacts with different domains of the 23S rRNA in the assembled 50S subunit and ribosome. In terms of biological role, forms part of the polypeptide exit tunnel. This chain is Large ribosomal subunit protein uL4, found in Rippkaea orientalis (strain PCC 8801 / RF-1) (Cyanothece sp. (strain PCC 8801)).